A 497-amino-acid chain; its full sequence is UPF0371 protein DIP2346 (497 aa).

The protein belongs to the UPF0371 family.

The polypeptide is UPF0371 protein DIP2346 (Corynebacterium diphtheriae (strain ATCC 700971 / NCTC 13129 / Biotype gravis)).